The sequence spans 394 residues: Probable aspartate/prephenate aminotransferase (394 aa).

Residues G40, W126, and N176 each coordinate L-aspartate. An N6-(pyridoxal phosphate)lysine modification is found at K239. Residue R370 participates in L-aspartate binding.

The protein belongs to the class-I pyridoxal-phosphate-dependent aminotransferase family. As to quaternary structure, homodimer. Pyridoxal 5'-phosphate is required as a cofactor.

Its subcellular location is the cytoplasm. It carries out the reaction L-aspartate + 2-oxoglutarate = oxaloacetate + L-glutamate. The catalysed reaction is L-arogenate + oxaloacetate = prephenate + L-aspartate. Catalyzes the reversible conversion of aspartate and 2-oxoglutarate to glutamate and oxaloacetate. Can also transaminate prephenate in the presence of aspartate. The sequence is that of Probable aspartate/prephenate aminotransferase (aspC) from Aquifex aeolicus (strain VF5).